A 335-amino-acid chain; its full sequence is tRNA N6-adenosine threonylcarbamoyltransferase (335 aa).

Fe cation contacts are provided by His111, His115, and Tyr132. Residues 132-136 (YVSGG), Asp164, Gly177, Glu181, and Asn260 each bind substrate. Asp288 contributes to the Fe cation binding site.

It belongs to the KAE1 / TsaD family. In terms of assembly, monomer. Component of the KEOPS complex that consists of Kae1, Bud32, Cgi121 and Pcc1; the whole complex dimerizes. Requires Fe(2+) as cofactor.

Its subcellular location is the cytoplasm. It carries out the reaction L-threonylcarbamoyladenylate + adenosine(37) in tRNA = N(6)-L-threonylcarbamoyladenosine(37) in tRNA + AMP + H(+). Its function is as follows. Required for the formation of a threonylcarbamoyl group on adenosine at position 37 (t(6)A37) in tRNAs that read codons beginning with adenine. Is a component of the KEOPS complex that is probably involved in the transfer of the threonylcarbamoyl moiety of threonylcarbamoyl-AMP (TC-AMP) to the N6 group of A37. Kae1 likely plays a direct catalytic role in this reaction, but requires other protein(s) of the complex to fulfill this activity. The protein is tRNA N6-adenosine threonylcarbamoyltransferase of Methanococcoides burtonii (strain DSM 6242 / NBRC 107633 / OCM 468 / ACE-M).